A 628-amino-acid polypeptide reads, in one-letter code: 1-deoxy-D-xylulose-5-phosphate synthase (628 aa).

Thiamine diphosphate is bound by residues His-72 and 113–115 (GHS). Asp-144 is a Mg(2+) binding site. Thiamine diphosphate contacts are provided by residues 145-146 (GA), Asn-173, Tyr-284, and Glu-367. Asn-173 is a Mg(2+) binding site.

This sequence belongs to the transketolase family. DXPS subfamily. As to quaternary structure, homodimer. Mg(2+) serves as cofactor. It depends on thiamine diphosphate as a cofactor.

The catalysed reaction is D-glyceraldehyde 3-phosphate + pyruvate + H(+) = 1-deoxy-D-xylulose 5-phosphate + CO2. The protein operates within metabolic intermediate biosynthesis; 1-deoxy-D-xylulose 5-phosphate biosynthesis; 1-deoxy-D-xylulose 5-phosphate from D-glyceraldehyde 3-phosphate and pyruvate: step 1/1. In terms of biological role, catalyzes the acyloin condensation reaction between C atoms 2 and 3 of pyruvate and glyceraldehyde 3-phosphate to yield 1-deoxy-D-xylulose-5-phosphate (DXP). The chain is 1-deoxy-D-xylulose-5-phosphate synthase from Exiguobacterium sibiricum (strain DSM 17290 / CCUG 55495 / CIP 109462 / JCM 13490 / 255-15).